The sequence spans 1295 residues: Protein FORGETTER 1 (1295 aa).

Composition is skewed to pro residues over residues 1-14 (MTQS…PLPA), 75-89 (PQQP…PPPI), and 162-177 (PPTP…PPPE). 4 disordered regions span residues 1–20 (MTQS…HSAA), 68–107 (RPQF…PAHG), 153–204 (LTAS…MDYR), and 626–688 (PEQP…NDSD). Residues 178 to 193 (EVNEEAIEVEREEDEG) are compositionally biased toward acidic residues. Positions 643 to 650 (RKRHSASP) match the Nuclear localization signal motif. Residues 669-688 (DNESDLESEADSADDSNDSD) show a composition bias toward acidic residues. Residues 691-741 (FQICQICSGEDERKKLLHCSECDKLFHPDCVVPPVIDLPSEAWICFSCKEK) form a PHD-type zinc finger.

The protein belongs to the SBNO family. In terms of assembly, interacts with SWI/SNF and ISWI chromatin remodelers such as BRM, CHR11 and CHR17. Binds to histone H3.

It localises to the nucleus. In terms of biological role, required for normal embryo development. Necessary to acquire heat stress (HS) memory, by modulating nucleosome occupancy and regulating heat-induced gene expression. Associates globally with the nucleosome-poor regions flanking the transcription units of expressed genes. Binds to the promoter regions, primarily to the proximal promoter just upstream of the transcriptional start sites (TSS) and somewhat more weakly to the region downstream of the transcription termination site (TTS), of actively expressed genes (e.g. HSA32, HSP18.2 and HSP22.0) in a heat-dependent fashion. The chain is Protein FORGETTER 1 from Arabidopsis thaliana (Mouse-ear cress).